Here is a 2201-residue protein sequence, read N- to C-terminus: Genome polyprotein (2201 aa).

A lipid anchor (N-myristoyl glycine; by host) is attached at Gly2. The Cytoplasmic segment spans residues 2–1511 (GAQVSTQKTG…YVSRAFICLQ (1510 aa)). An amphipathic alpha-helix region spans residues 566–582 (KLQGDVEEAIERARCTV). Positions 858-860 (RGD) match the Cell attachment site motif. Active-site for protease 2A activity residues include His888 and Asp906. Cys923 and Cys925 together coordinate Zn(2+). Catalysis depends on Cys977, which acts as the For protease 2A activity. Cys983 and His985 together coordinate Zn(2+). A membrane-binding region spans residues 1117–1189 (NDSWLKKFTE…EQSAPSQSDQ (73 aa)). Residues 1117-1255 (NDSWLKKFTE…SPGAGKSVAT (139 aa)) are oligomerization. The segment at 1138 to 1142 (AIKIQ) is RNA-binding. Residues 1221-1377 (EKKMSNYIQF…SMYSQNGKIN (157 aa)) enclose the SF3 helicase domain. Cys1385, Cys1397, and Cys1402 together coordinate Zn(2+). The C4-type; degenerate zinc-finger motif lies at 1385-1402 (CDEECCPVNFKKCCPLVC). The interval 1429-1436 (EYNHRHSV) is RNA-binding. The oligomerization stretch occupies residues 1440-1445 (LEALFQ). Residues 1512-1527 (AITTFVSVAGIIYIIY) lie within the membrane without spanning it. Over 1528-2201 (KLFAGFQGAY…TLRRKWLDSF (674 aa)) the chain is Cytoplasmic. An O-(5'-phospho-RNA)-tyrosine modification is found at Tyr1537. Residues 1557-1735 (GPAFEFAVAM…FSAALLKHYF (179 aa)) form the Peptidase C3 domain. Catalysis depends on for protease 3C activity residues His1596, Glu1627, and Cys1703. Residues 1966-2082 (GHLIAFDYSG…SYPWPIDASL (117 aa)) form the RdRp catalytic domain. Mg(2+)-binding residues include Asp1972 and Asp2068.

Belongs to the picornaviruses polyprotein family. In terms of assembly, interacts with capsid protein VP1 and capsid protein VP3 to form heterotrimeric protomers. Interacts with capsid protein VP0, and capsid protein VP3 to form heterotrimeric protomers. Five protomers subsequently associate to form pentamers which serve as building blocks for the capsid. Interacts with capsid protein VP2, capsid protein VP3 and capsid protein VP4 following cleavage of capsid protein VP0. Interacts with host integrin heterodimer ITGAV/ITGB6. As to quaternary structure, interacts with capsid protein VP1 and capsid protein VP3 in the mature capsid. In terms of assembly, interacts with capsid protein VP0 and capsid protein VP1 to form heterotrimeric protomers. Five protomers subsequently associate to form pentamers which serve as building blocks for the capsid. Interacts with capsid protein VP4 in the mature capsid. Interacts with protein 2C; this interaction may be important for virion morphogenesis. Interacts with capsid protein VP1 and capsid protein VP3. As to quaternary structure, homodimer. In terms of assembly, homohexamer; forms a hexameric ring structure with 6-fold symmetry characteristic of AAA+ ATPases. Interacts (via N-terminus) with host RTN3 (via reticulon domain); this interaction is important for viral replication. Interacts with capsid protein VP3; this interaction may be important for virion morphogenesis. Interacts with protein 3CD. As to quaternary structure, homodimer. Interacts with host GBF1. Interacts (via GOLD domain) with host ACBD3 (via GOLD domain); this interaction allows the formation of a viral protein 3A/ACBD3 heterotetramer with a 2:2 stoichiometry, which will stimulate the recruitment of host PI4KB in order to synthesize PI4P at the viral RNA replication sites. In terms of assembly, interacts with RNA-directed RNA polymerase. Interacts with protein 3AB and with RNA-directed RNA polymerase. As to quaternary structure, interacts with Viral protein genome-linked and with protein 3CD. Mg(2+) is required as a cofactor. Post-translationally, specific enzymatic cleavages in vivo by the viral proteases yield processing intermediates and the mature proteins. In terms of processing, myristoylation is required for the formation of pentamers during virus assembly. Further assembly of 12 pentamers and a molecule of genomic RNA generates the provirion. During virion maturation, immature virions are rendered infectious following cleavage of VP0 into VP4 and VP2. This maturation seems to be an autocatalytic event triggered by the presence of RNA in the capsid and it is followed by a conformational change infectious virion. Post-translationally, myristoylation is required during RNA encapsidation and formation of the mature virus particle. In terms of processing, VPg is uridylylated by the polymerase into VPg-pUpU. This acts as a nucleotide-peptide primer for the genomic RNA replication.

Its subcellular location is the virion. It is found in the host cytoplasm. The protein localises to the host cytoplasmic vesicle membrane. The protein resides in the host nucleus. The catalysed reaction is a ribonucleoside 5'-triphosphate + H2O = a ribonucleoside 5'-diphosphate + phosphate + H(+). It catalyses the reaction Selective cleavage of Tyr-|-Gly bond in the picornavirus polyprotein.. The enzyme catalyses RNA(n) + a ribonucleoside 5'-triphosphate = RNA(n+1) + diphosphate. It carries out the reaction Selective cleavage of Gln-|-Gly bond in the poliovirus polyprotein. In other picornavirus reactions Glu may be substituted for Gln, and Ser or Thr for Gly.. Its activity is regulated as follows. Replication or transcription is subject to high level of random mutations by the nucleotide analog ribavirin. Functionally, forms an icosahedral capsid of pseudo T=3 symmetry with capsid proteins VP2 and VP3. The capsid is 300 Angstroms in diameter, composed of 60 copies of each capsid protein and enclosing the viral positive strand RNA genome. Capsid protein VP1 mainly forms the vertices of the capsid. Capsid protein VP1 interacts with host integrin ITGAV/ITGB6 to provide virion attachment to target host cells. This attachment induces virion internalization. Tyrosine kinases are probably involved in the entry process. After binding to its receptor, the capsid undergoes conformational changes. Capsid protein VP1 N-terminus (that contains an amphipathic alpha-helix) and capsid protein VP4 are externalized. Together, they shape a pore in the host membrane through which viral genome is translocated to host cell cytoplasm. Its function is as follows. Forms an icosahedral capsid of pseudo T=3 symmetry with capsid proteins VP2 and VP3. The capsid is 300 Angstroms in diameter, composed of 60 copies of each capsid protein and enclosing the viral positive strand RNA genome. Lies on the inner surface of the capsid shell. After binding to the host receptor, the capsid undergoes conformational changes. Capsid protein VP4 is released, Capsid protein VP1 N-terminus is externalized, and together, they shape a pore in the host membrane through which the viral genome is translocated into the host cell cytoplasm. In terms of biological role, component of immature procapsids, which is cleaved into capsid proteins VP4 and VP2 after maturation. Allows the capsid to remain inactive before the maturation step. Functionally, cysteine protease that cleaves viral polyprotein and specific host proteins. It is responsible for the autocatalytic cleavage between the P1 and P2 regions, which is the first cleavage occurring in the polyprotein. Also cleaves the host translation initiation factor EIF4G1, in order to shut down the capped cellular mRNA translation. Inhibits the host nucleus-cytoplasm protein and RNA trafficking by cleaving host members of the nuclear pores. Counteracts stress granule formation probably by antagonizing its assembly or promoting its dissassembly. Cleaves and inhibits host IFIH1/MDA5, thereby inhibiting the type-I IFN production and the establishment of the antiviral state. Cleaves and inhibits host MAVS, thereby inhibiting the type-I IFN production and the establishment of the antiviral state. Its function is as follows. Plays an essential role in the virus replication cycle by acting as a viroporin. Creates a pore in the host endoplasmic reticulum and as a consequence releases Ca2+ in the cytoplasm of infected cell. In turn, high levels of cytoplasmic calcium may trigger membrane trafficking and transport of viral ER-associated proteins to viroplasms, sites of viral genome replication. Induces and associates with structural rearrangements of intracellular membranes. Displays RNA-binding, nucleotide binding and NTPase activities. May play a role in virion morphogenesis and viral RNA encapsidation by interacting with the capsid protein VP3. In terms of biological role, localizes the viral replication complex to the surface of membranous vesicles. Together with protein 3CD binds the Cis-Active RNA Element (CRE) which is involved in RNA synthesis initiation. Acts as a cofactor to stimulate the activity of 3D polymerase, maybe through a nucleid acid chaperone activity. Functionally, localizes the viral replication complex to the surface of membranous vesicles. It inhibits host cell endoplasmic reticulum-to-Golgi apparatus transport and causes the disassembly of the Golgi complex, possibly through GBF1 interaction. This would result in depletion of MHC, trail receptors and IFN receptors at the host cell surface. Plays an essential role in viral RNA replication by recruiting ACBD3 and PI4KB at the viral replication sites, thereby allowing the formation of the rearranged membranous structures where viral replication takes place. Its function is as follows. Acts as a primer for viral RNA replication and remains covalently bound to viral genomic RNA. VPg is uridylylated prior to priming replication into VPg-pUpU. The oriI viral genomic sequence may act as a template for this. The VPg-pUpU is then used as primer on the genomic RNA poly(A) by the RNA-dependent RNA polymerase to replicate the viral genome. During genome replication, the VPg-RNA linkage is removed by the host TDP2, thereby accelerating replication. During the late stage of the replication cycle, host TDP2 is excluded from sites of viral RNA synthesis and encapsidation, allowing for the generation of progeny virions. Involved in the viral replication complex and viral polypeptide maturation. It exhibits protease activity with a specificity and catalytic efficiency that is different from protease 3C. Protein 3CD lacks polymerase activity. Protein 3CD binds to the 5'UTR of the viral genome. In terms of biological role, replicates the viral genomic RNA on the surface of intracellular membranes. May form linear arrays of subunits that propagate along a strong head-to-tail interaction called interface-I. Covalently attaches UMP to a tyrosine of VPg, which is used to prime RNA synthesis. The positive stranded RNA genome is first replicated at virus induced membranous vesicles, creating a dsRNA genomic replication form. This dsRNA is then used as template to synthesize positive stranded RNA genomes. ss(+)RNA genomes are either translated, replicated or encapsidated. Functionally, major viral protease that mediates proteolytic processing of the polyprotein. Cleaves host EIF5B, contributing to host translation shutoff. Also cleaves host PABPC1, contributing to host translation shutoff. Cleaves host NLRP1, triggers host N-glycine-mediated degradation of the autoinhibitory NLRP1 N-terminal fragment. The polypeptide is Genome polyprotein (Coxsackievirus A9 (strain Griggs)).